The sequence spans 260 residues: Thiazole synthase (260 aa).

K102 functions as the Schiff-base intermediate with DXP in the catalytic mechanism. Residues G163, 189 to 190 (AG), and 211 to 212 (NT) contribute to the 1-deoxy-D-xylulose 5-phosphate site.

It belongs to the ThiG family. In terms of assembly, homotetramer. Forms heterodimers with either ThiH or ThiS.

Its subcellular location is the cytoplasm. The enzyme catalyses [ThiS sulfur-carrier protein]-C-terminal-Gly-aminoethanethioate + 2-iminoacetate + 1-deoxy-D-xylulose 5-phosphate = [ThiS sulfur-carrier protein]-C-terminal Gly-Gly + 2-[(2R,5Z)-2-carboxy-4-methylthiazol-5(2H)-ylidene]ethyl phosphate + 2 H2O + H(+). Its pathway is cofactor biosynthesis; thiamine diphosphate biosynthesis. Its function is as follows. Catalyzes the rearrangement of 1-deoxy-D-xylulose 5-phosphate (DXP) to produce the thiazole phosphate moiety of thiamine. Sulfur is provided by the thiocarboxylate moiety of the carrier protein ThiS. In vitro, sulfur can be provided by H(2)S. This is Thiazole synthase from Geobacter metallireducens (strain ATCC 53774 / DSM 7210 / GS-15).